The chain runs to 211 residues: Uracil phosphoribosyltransferase (211 aa).

30–34 provides a ligand contact to GTP; that stretch reads KGLVR. 5-phospho-alpha-D-ribose 1-diphosphate is bound by residues arginine 79, arginine 104, and 133–141; that span reads DPMLATGIT. Residues isoleucine 197 and 202–204 contribute to the uracil site; that span reads GDA. Residue aspartate 203 coordinates 5-phospho-alpha-D-ribose 1-diphosphate.

This sequence belongs to the UPRTase family. The cofactor is Mg(2+).

It carries out the reaction UMP + diphosphate = 5-phospho-alpha-D-ribose 1-diphosphate + uracil. The protein operates within pyrimidine metabolism; UMP biosynthesis via salvage pathway; UMP from uracil: step 1/1. Allosterically activated by GTP. Its function is as follows. Catalyzes the conversion of uracil and 5-phospho-alpha-D-ribose 1-diphosphate (PRPP) to UMP and diphosphate. The chain is Uracil phosphoribosyltransferase from Pyrobaculum islandicum (strain DSM 4184 / JCM 9189 / GEO3).